The sequence spans 426 residues: 3-phosphoshikimate 1-carboxyvinyltransferase (426 aa).

The 3-phosphoshikimate site is built by lysine 22, serine 23, and arginine 27. Lysine 22 provides a ligand contact to phosphoenolpyruvate. Phosphoenolpyruvate is bound by residues glycine 96 and arginine 124. 3-phosphoshikimate is bound by residues serine 170, serine 171, glutamine 172, serine 198, aspartate 314, asparagine 337, and lysine 341. Glutamine 172 lines the phosphoenolpyruvate pocket. The active-site Proton acceptor is the aspartate 314. 3 residues coordinate phosphoenolpyruvate: arginine 345, arginine 387, and lysine 412.

This sequence belongs to the EPSP synthase family. In terms of assembly, monomer.

It is found in the cytoplasm. It catalyses the reaction 3-phosphoshikimate + phosphoenolpyruvate = 5-O-(1-carboxyvinyl)-3-phosphoshikimate + phosphate. It participates in metabolic intermediate biosynthesis; chorismate biosynthesis; chorismate from D-erythrose 4-phosphate and phosphoenolpyruvate: step 6/7. In terms of biological role, catalyzes the transfer of the enolpyruvyl moiety of phosphoenolpyruvate (PEP) to the 5-hydroxyl of shikimate-3-phosphate (S3P) to produce enolpyruvyl shikimate-3-phosphate and inorganic phosphate. The chain is 3-phosphoshikimate 1-carboxyvinyltransferase from Aliivibrio fischeri (strain MJ11) (Vibrio fischeri).